We begin with the raw amino-acid sequence, 101 residues long: Large ribosomal subunit protein eL43 (101 aa).

The C4-type zinc-finger motif lies at 40 to 62 (CPSCRSLVRLQRIAFGIWKCPKC).

This sequence belongs to the eukaryotic ribosomal protein eL43 family. Requires Zn(2+) as cofactor.

This chain is Large ribosomal subunit protein eL43, found in Pyrobaculum neutrophilum (strain DSM 2338 / JCM 9278 / NBRC 100436 / V24Sta) (Thermoproteus neutrophilus).